Reading from the N-terminus, the 513-residue chain is ATP synthase subunit alpha (513 aa).

Residue 171–178 (GDRQIGKT) coordinates ATP.

Belongs to the ATPase alpha/beta chains family. In terms of assembly, F-type ATPases have 2 components, CF(1) - the catalytic core - and CF(0) - the membrane proton channel. CF(1) has five subunits: alpha(3), beta(3), gamma(1), delta(1), epsilon(1). CF(0) has three main subunits: a(1), b(2) and c(9-12). The alpha and beta chains form an alternating ring which encloses part of the gamma chain. CF(1) is attached to CF(0) by a central stalk formed by the gamma and epsilon chains, while a peripheral stalk is formed by the delta and b chains.

Its subcellular location is the cell membrane. The catalysed reaction is ATP + H2O + 4 H(+)(in) = ADP + phosphate + 5 H(+)(out). Functionally, produces ATP from ADP in the presence of a proton gradient across the membrane. The alpha chain is a regulatory subunit. The protein is ATP synthase subunit alpha of Wolbachia pipientis subsp. Culex pipiens (strain wPip).